The primary structure comprises 287 residues: Probable aquaporin PIP1-5 (287 aa).

M1 carries the N-acetylmethionine modification. Residues 1-34 (MEGKEEDVNVGANKFPERQPIGTAAQTESKDYKE) form a disordered region. At 1–55 (MEGKEEDVNVGANKFPERQPIGTAAQTESKDYKEPPPAPFFEPGELKSWSFYRAG) the chain is on the cytoplasmic side. Residues 56–76 (IAEFIATFLFLYVTVLTVMGV) traverse the membrane as a helical segment. Residues 77–92 (KRAPNMCASVGIQGIA) are Extracellular-facing. A helical membrane pass occupies residues 93 to 113 (WAFGGMIFALVYCTAGISGGH). Residues 114–133 (INPAVTFGLFLARKLSLTRA) are Cytoplasmic-facing. Positions 115–117 (NPA) match the NPA 1 motif. The chain crosses the membrane as a helical span at residues 134–154 (LFYIVMQCLGAICGAGVVKGF). The Extracellular segment spans residues 155 to 175 (QPGLYQTNGGGANVVAHGYTK). Residues 176-196 (GSGLGAEIVGTFVLVYTVFSA) form a helical membrane-spanning segment. Topologically, residues 197–209 (TDAKRSARDSHVP) are cytoplasmic. The helical transmembrane segment at 210–230 (ILAPLPIGFAVFLVHLATIPI) threads the bilayer. Over 231–257 (TGTGINPARSLGAAIIYNKDHAWDDHW) the chain is Extracellular. Residues 236 to 238 (NPA) carry the NPA 2 motif. Residues 258-278 (IFWVGPFIGAALAALYHQIVI) traverse the membrane as a helical segment. Residues 279–287 (RAIPFKSKT) are Cytoplasmic-facing. S285 carries the post-translational modification Phosphoserine.

The protein belongs to the MIP/aquaporin (TC 1.A.8) family. PIP (TC 1.A.8.11) subfamily. In terms of tissue distribution, predominantly expressed in green siliques. Also expressed above ground, in roots and flower buds.

The protein localises to the cell membrane. In terms of biological role, aquaporins facilitate the transport of water and small neutral solutes across cell membranes. This Arabidopsis thaliana (Mouse-ear cress) protein is Probable aquaporin PIP1-5 (PIP1-5).